The chain runs to 120 residues: Galanin-like peptide (120 aa).

The signal sequence occupies residues 1 to 22; that stretch reads MALTVPLIVLAVLLSLMESPAS. Residues 85–120 constitute a propeptide that is removed on maturation; the sequence is SLGETFAKPDSGVTFVGVPDVVPWKRIRPGTTRFQI.

Belongs to the galanin family.

It is found in the secreted. In terms of biological role, hypothalamic neuropeptide which binds to the G-protein-coupled galanin receptors (GALR1, GALR2 and GALR3). Involved in a large number of putative physiological functions in CNS homeostatic processes, including the regulation of gonadotropin-releasing hormone secretion. The sequence is that of Galanin-like peptide (GALP) from Sus scrofa (Pig).